A 655-amino-acid polypeptide reads, in one-letter code: RNA-binding protein EWS (655 aa).

The segment at 1-285 is EAD (Gln/Pro/Thr-rich); the sequence is MASTDYSTYS…GVYGQESGGF (285 aa). A run of 31 repeats spans residues 8–16, 17–27, 28–34, 35–42, 43–50, 51–59, 60–68, 69–75, 76–84, 85–91, 92–110, 111–116, 117–125, 126–156, 157–163, 164–170, 171–177, 178–188, 189–193, 194–201, 202–206, 207–212, 213–218, 219–224, 225–230, 231–238, 239–245, 246–252, 253–259, 260–276, and 277–285. The interval 8–285 is 31 X approximate tandem repeats; it reads TYSQAAAQQG…GVYGQESGGF (278 aa). The tract at residues 121–350 is disordered; that stretch reads QPAYPTYGQQ…EGPDLDLGLP (230 aa). Polar residues-rich tracts occupy residues 127 to 137 and 146 to 172; these read YGQQPTATAPT and AETS…NYSY. Over residues 192 to 266 the composition is skewed to low complexity; sequence PTSYSSSQPT…QSSSYGQQSS (75 aa). The 30-residue stretch at 256–285 folds into the IQ domain; sequence QQSSSYGQQSSFRQDHPSSMGVYGQESGGF. Ser-266 carries the post-translational modification Phosphoserine; by PKC. 7 positions are modified to asymmetric dimethylarginine: Arg-300, Arg-302, Arg-304, Arg-309, Arg-314, Arg-317, and Arg-321. The span at 308–334 shows a compositional bias: gly residues; the sequence is DRGGMSRGGRGGGRGGLGAGERGGFNK. A compositionally biased stretch (low complexity) spans 335-350; the sequence is PGGPMDEGPDLDLGLP. One can recognise an RRM domain in the interval 360–446; that stretch reads SAIYVQGLND…SKLKVSLARK (87 aa). Position 438 is an N6-acetyllysine (Lys-438). 2 disordered regions span residues 447–524 and 544–655; these read KPPM…WQCP and APKP…DRPY. Arg-454 and Arg-463 each carry asymmetric dimethylarginine. The residue at position 470 (Arg-470) is an Asymmetric dimethylarginine; alternate. Omega-N-methylarginine; alternate is present on Arg-470. Over residues 471–489 the composition is skewed to gly residues; it reads GGPGGPGGPGGPMGRMGGR. Arg-485 bears the Omega-N-methylarginine mark. Residue Arg-489 is modified to Asymmetric dimethylarginine; by PRMT8. An asymmetric dimethylarginine mark is found at Arg-493, Arg-499, and Arg-502. Arg-505 carries the post-translational modification Asymmetric dimethylarginine; alternate. Arg-505 is subject to Omega-N-methylarginine; alternate. A RanBP2-type zinc finger spans residues 517–548; the sequence is RAGDWQCPNPGCGNQNFAWRTECNQCKAPKPE. Over residues 550–559 the composition is skewed to pro residues; the sequence is FLPPPFPPPG. Asymmetric dimethylarginine occurs at positions 562 and 564. Gly residues predominate over residues 565 to 590; it reads GGPGGMRGGRGGLMDRGGPGGMFRGG. Residue Arg-571 is modified to Asymmetric dimethylarginine; alternate; by PRMT8. Position 571 is an omega-N-methylarginine; alternate; by PRMT8 (Arg-571). Asymmetric dimethylarginine is present on residues Arg-574, Arg-580, Arg-588, and Arg-591. The span at 591–605 shows a compositional bias: basic and acidic residues; that stretch reads RGGDRGGFRGGRGMD. An Asymmetric dimethylarginine; alternate; by PRMT8 modification is found at Arg-595. Position 595 is an omega-N-methylarginine; alternate; by PRMT8 (Arg-595). The residue at position 599 (Arg-599) is an Asymmetric dimethylarginine. Arg-602 is modified (asymmetric dimethylarginine; by PRMT8). Asymmetric dimethylarginine; alternate; by PRMT8 is present on Arg-606. Omega-N-methylarginine; alternate; by PRMT8 is present on Arg-606. Positions 606-617 are enriched in gly residues; sequence RGGFGGGRRGGP. Arg-614 bears the Asymmetric dimethylarginine; alternate mark. Omega-N-methylarginine; alternate is present on Arg-614. An asymmetric dimethylarginine mark is found at Arg-632 and Arg-635. The short motif at 638–655 is the Nuclear localization signal element; sequence PGKMDKGEHRQERRDRPY. The segment covering 640–655 has biased composition (basic and acidic residues); the sequence is KMDKGEHRQERRDRPY.

The protein belongs to the RRM TET family. In terms of assembly, binds RNA, POLR2C, SF1 and calmodulin. Interacts with PTK2B and TDRD3. Forms a complex with REC8, PRDM9, SYCP3 and SYCP1; complex formation is dependent of phosphorylated form of REC8 and requires PRDM9 bound to hotspot DNA; EWSR1 joins PRDM9 with the chromosomal axis through REC8. In terms of processing, phosphorylated; calmodulin-binding inhibits phosphorylation of Ser-266. Post-translationally, highly methylated on arginine residues. Methylation is mediated by PRMT1 and, at lower level by PRMT8.

It localises to the nucleus. The protein localises to the cytoplasm. It is found in the cell membrane. In terms of biological role, binds to ssRNA containing the consensus sequence 5'-AGGUAA-3'. Might function as a transcriptional repressor. The protein is RNA-binding protein EWS (Ewsr1) of Mus musculus (Mouse).